The primary structure comprises 354 residues: Holliday junction branch migration complex subunit RuvB (354 aa).

The segment at 1-183 is large ATPase domain (RuvB-L); it reads MTGDNLVSAY…FGFVAHLDFY (183 aa). Residues R23, G64, K67, T68, S69, 130–132, R173, Y183, and R220 each bind ATP; that span reads EDF. Residue T68 participates in Mg(2+) binding. The segment at 184–254 is small ATPAse domain (RuvB-S); it reads SPADLETLLH…AARAALLVYD (71 aa). The segment at 257-354 is head domain (RuvB-H); sequence ALGLDRLDRQ…DLFSVEPDQP (98 aa). Residues R312 and R317 each coordinate DNA. The interval 330 to 354 is disordered; that stretch reads TPPNGIFGSDAPPASDLFSVEPDQP.

Belongs to the RuvB family. In terms of assembly, homohexamer. Forms an RuvA(8)-RuvB(12)-Holliday junction (HJ) complex. HJ DNA is sandwiched between 2 RuvA tetramers; dsDNA enters through RuvA and exits via RuvB. An RuvB hexamer assembles on each DNA strand where it exits the tetramer. Each RuvB hexamer is contacted by two RuvA subunits (via domain III) on 2 adjacent RuvB subunits; this complex drives branch migration. In the full resolvosome a probable DNA-RuvA(4)-RuvB(12)-RuvC(2) complex forms which resolves the HJ.

It localises to the cytoplasm. It carries out the reaction ATP + H2O = ADP + phosphate + H(+). In terms of biological role, the RuvA-RuvB-RuvC complex processes Holliday junction (HJ) DNA during genetic recombination and DNA repair, while the RuvA-RuvB complex plays an important role in the rescue of blocked DNA replication forks via replication fork reversal (RFR). RuvA specifically binds to HJ cruciform DNA, conferring on it an open structure. The RuvB hexamer acts as an ATP-dependent pump, pulling dsDNA into and through the RuvAB complex. RuvB forms 2 homohexamers on either side of HJ DNA bound by 1 or 2 RuvA tetramers; 4 subunits per hexamer contact DNA at a time. Coordinated motions by a converter formed by DNA-disengaged RuvB subunits stimulates ATP hydrolysis and nucleotide exchange. Immobilization of the converter enables RuvB to convert the ATP-contained energy into a lever motion, pulling 2 nucleotides of DNA out of the RuvA tetramer per ATP hydrolyzed, thus driving DNA branch migration. The RuvB motors rotate together with the DNA substrate, which together with the progressing nucleotide cycle form the mechanistic basis for DNA recombination by continuous HJ branch migration. Branch migration allows RuvC to scan DNA until it finds its consensus sequence, where it cleaves and resolves cruciform DNA. In Salinispora arenicola (strain CNS-205), this protein is Holliday junction branch migration complex subunit RuvB.